A 514-amino-acid polypeptide reads, in one-letter code: Threonine synthase (514 aa).

K124 is modified (N6-(pyridoxal phosphate)lysine). G277, N278, F279, D281, and T449 together coordinate pyridoxal 5'-phosphate. The residue at position 467 (S467) is a Phosphoserine.

It belongs to the threonine synthase family. Pyridoxal 5'-phosphate is required as a cofactor.

It carries out the reaction O-phospho-L-homoserine + H2O = L-threonine + phosphate. It participates in amino-acid biosynthesis; L-threonine biosynthesis; L-threonine from L-aspartate: step 5/5. Functionally, catalyzes the gamma-elimination of phosphate from L-phosphohomoserine and the beta-addition of water to produce L-threonine. This is Threonine synthase (THR4) from Saccharomyces cerevisiae (strain ATCC 204508 / S288c) (Baker's yeast).